Reading from the N-terminus, the 166-residue chain is Protein SprT (166 aa).

Residues 20 to 164 (EHLANANRKL…CVRCGDLLVA (145 aa)) form the SprT-like domain. Zn(2+) is bound at residue H78. Residue E79 is part of the active site. H82 contributes to the Zn(2+) binding site.

The protein belongs to the SprT family. Requires Zn(2+) as cofactor.

The protein localises to the cytoplasm. The polypeptide is Protein SprT (Klebsiella pneumoniae subsp. pneumoniae (strain ATCC 700721 / MGH 78578)).